Here is a 171-residue protein sequence, read N- to C-terminus: 3-hydroxydecanoyl-[acyl-carrier-protein] dehydratase (171 aa).

The active site involves His-71.

Belongs to the thioester dehydratase family. FabA subfamily. Homodimer.

It localises to the cytoplasm. The catalysed reaction is a (3R)-hydroxyacyl-[ACP] = a (2E)-enoyl-[ACP] + H2O. It catalyses the reaction (3R)-hydroxydecanoyl-[ACP] = (2E)-decenoyl-[ACP] + H2O. It carries out the reaction (2E)-decenoyl-[ACP] = (3Z)-decenoyl-[ACP]. It functions in the pathway lipid metabolism; fatty acid biosynthesis. Functionally, necessary for the introduction of cis unsaturation into fatty acids. Catalyzes the dehydration of (3R)-3-hydroxydecanoyl-ACP to E-(2)-decenoyl-ACP and then its isomerization to Z-(3)-decenoyl-ACP. Can catalyze the dehydratase reaction for beta-hydroxyacyl-ACPs with saturated chain lengths up to 16:0, being most active on intermediate chain length. In Sinorhizobium medicae (strain WSM419) (Ensifer medicae), this protein is 3-hydroxydecanoyl-[acyl-carrier-protein] dehydratase.